A 500-amino-acid polypeptide reads, in one-letter code: MSFVLAIDQGTTSSRAIVFRSDISIAARAQAEFPQHFPASGWVEHEPEDIWTSTVMVCRDAIAQAGISAKDIAAIGITNQRETTVVWDRATGQAVHRAIVWQDRRTADICAKLKADGREPVISEKTGLIIDPYFSGTKVAWILDHVPGARARAARGELMFGTVDCYLLWRLTGGKVHATDATNASRTLLFNIHTGQWDDELLEIIGVPRSMLPEVKDSSARFGESVPDLFGGAIAISGIAGDQQAATIGQACFRPGMMKSTYGTGCFALLNTGTTPVVSKNKLLTTVAYQLDGKRTYALEGSIFVAGSAVQWLRDGLGIIKHAAETGPLADQSDSMQSVYLVPAFVGMGAPYWNPRVRGALFGLTRNTGPAELAHAALESVCYQTFDLWAAMRADWPSSETASVVLRVDGGMTASDWTMQRLADLLDAPVDRPVIQETTALGAAYLAGLNAGVYPEPTKFADNWRLEHRFKPNMSEATRERKLAGWARAVKGVLASDEGA.

Thr-11 is a binding site for ADP. The ATP site is built by Thr-11, Thr-12, and Ser-13. Thr-11 contributes to the sn-glycerol 3-phosphate binding site. Arg-15 is a binding site for ADP. Positions 81, 82, 133, and 242 each coordinate sn-glycerol 3-phosphate. Arg-81, Glu-82, Tyr-133, Asp-242, and Gln-243 together coordinate glycerol. 2 residues coordinate ADP: Thr-264 and Gly-307. ATP contacts are provided by Thr-264, Gly-307, Gln-311, and Gly-411. Gly-411 is an ADP binding site.

Belongs to the FGGY kinase family.

The catalysed reaction is glycerol + ATP = sn-glycerol 3-phosphate + ADP + H(+). The protein operates within polyol metabolism; glycerol degradation via glycerol kinase pathway; sn-glycerol 3-phosphate from glycerol: step 1/1. Its activity is regulated as follows. Inhibited by fructose 1,6-bisphosphate (FBP). Key enzyme in the regulation of glycerol uptake and metabolism. Catalyzes the phosphorylation of glycerol to yield sn-glycerol 3-phosphate. The sequence is that of Glycerol kinase from Bradyrhizobium diazoefficiens (strain JCM 10833 / BCRC 13528 / IAM 13628 / NBRC 14792 / USDA 110).